Consider the following 520-residue polypeptide: Polyprenol-phosphate-mannose--protein mannosyltransferase (520 aa).

Transmembrane regions (helical) follow at residues 38–58 (WAIIAVFALVTRFTGLSSATA), 119–139 (LGWRIMVAIFGTLTIFAIMAI), 145–165 (GSTMVTFIAGILALADGVLLV), 168–188 (RFGMLDIFLVFFITAAAWALI), 237–257 (WSGLYYIAFFGLTSVFLDLWL), 274–294 (DVIPALGSLVIIPALLYIWSW), 388–408 (IYLFGTPAIWWLTVPVILWAL), 418–438 (GYVVPLVAFAAGFLPWLAAYD), 441–461 (MYFFYATALVPFTIIMLALAC), and 485–505 (YISLVVMMFLAFSPLFYGFVI).

Belongs to the glycosyltransferase 39 family.

It localises to the cell membrane. The protein operates within protein modification; protein glycosylation. Its function is as follows. Protein O-mannosyltransferase that catalyzes the transfer of a single mannose residue from a polyprenol phospho-mannosyl lipidic donor to the hydroxyl group of selected serine and threonine residues in acceptor proteins. This Corynebacterium glutamicum (strain ATCC 13032 / DSM 20300 / JCM 1318 / BCRC 11384 / CCUG 27702 / LMG 3730 / NBRC 12168 / NCIMB 10025 / NRRL B-2784 / 534) protein is Polyprenol-phosphate-mannose--protein mannosyltransferase (pmt).